The primary structure comprises 303 residues: MSDGIMHLLDPAPFGRVLPAMITPMKPNGDVDFDMAQTVAKQLVADGADGLVVNGTTGESPTTHMDEKVELVKAVKEVVDVPVISGAGSNDTAHTVRMVEQTQEAGADAVLVVCPYYSRPSQQGIFCHYQAVNESADKPIIVYDVPGRTGVRIALDTYVHLAELDHVKAVKDATGDIAGAVRKRMETGLTWYSGDDALYLPFLSIGAVGIISVVAHAAAKPMRELAEAFDRGDIAKAQGLANRIAPVIEAMNGTGFQAVMAKAALKVRGIMECTTMRLPNIGPNDEQIEVVRDGLRASGLIPE.

T57 contacts pyruvate. Y143 serves as the catalytic Proton donor/acceptor. Residue K171 is the Schiff-base intermediate with substrate of the active site. I211 is a binding site for pyruvate.

The protein belongs to the DapA family. In terms of assembly, homotetramer; dimer of dimers.

Its subcellular location is the cytoplasm. It catalyses the reaction L-aspartate 4-semialdehyde + pyruvate = (2S,4S)-4-hydroxy-2,3,4,5-tetrahydrodipicolinate + H2O + H(+). Its pathway is amino-acid biosynthesis; L-lysine biosynthesis via DAP pathway; (S)-tetrahydrodipicolinate from L-aspartate: step 3/4. Its function is as follows. Catalyzes the condensation of (S)-aspartate-beta-semialdehyde [(S)-ASA] and pyruvate to 4-hydroxy-tetrahydrodipicolinate (HTPA). The sequence is that of 4-hydroxy-tetrahydrodipicolinate synthase from Bifidobacterium animalis subsp. lactis (strain AD011).